The sequence spans 320 residues: ATP phosphoribosyltransferase (320 aa).

Belongs to the ATP phosphoribosyltransferase family. Long subfamily. It depends on Mg(2+) as a cofactor.

It is found in the cytoplasm. It carries out the reaction 1-(5-phospho-beta-D-ribosyl)-ATP + diphosphate = 5-phospho-alpha-D-ribose 1-diphosphate + ATP. It functions in the pathway amino-acid biosynthesis; L-histidine biosynthesis; L-histidine from 5-phospho-alpha-D-ribose 1-diphosphate: step 1/9. Its activity is regulated as follows. Feedback inhibited by histidine. In terms of biological role, catalyzes the condensation of ATP and 5-phosphoribose 1-diphosphate to form N'-(5'-phosphoribosyl)-ATP (PR-ATP). Has a crucial role in the pathway because the rate of histidine biosynthesis seems to be controlled primarily by regulation of HisG enzymatic activity. The sequence is that of ATP phosphoribosyltransferase (hisG) from Caulobacter vibrioides (strain ATCC 19089 / CIP 103742 / CB 15) (Caulobacter crescentus).